The chain runs to 666 residues: SNARE-interacting protein KEULE (666 aa).

Residues 340 to 377 (KNKAAQLQGKRDGAELSTRDLQKMVQALPQYSEQIDKL) adopt a coiled-coil conformation. Positions 534-589 (KEDFPCMNDPSPSFHGSTSLSSAASSSQGQAAQSMRSRRTPTWAKPRGSDDGYSSD) are disordered. The segment covering 550 to 568 (STSLSSAASSSQGQAAQSM) has biased composition (low complexity).

This sequence belongs to the STXBP/unc-18/SEC1 family. Binds the syntaxin KNOLLE. Interacts with SEC6. In terms of tissue distribution, expressed throughout the plant, both in mitotically active and quiescent cells. Enriched in dividing tissues.

It is found in the cytoplasm. It localises to the membrane. The protein localises to the cytoskeleton. The protein resides in the phragmoplast. Regulator of vesicle trafficking involved in cytokinesis and root hair development, but not required for cell elongation. In Arabidopsis thaliana (Mouse-ear cress), this protein is SNARE-interacting protein KEULE (KEU).